The sequence spans 182 residues: Large ribosomal subunit protein bL17 (182 aa).

The interval 126-182 (ERANRVAASKAKKAEAEAAEAKAEEAEEAPEVEADTATDKAAEAEAAEAADEAAEDK) is disordered. The span at 137 to 149 (KKAEAEAAEAKAE) shows a compositional bias: basic and acidic residues. 2 stretches are compositionally biased toward acidic residues: residues 150 to 161 (EAEEAPEVEADT) and 170 to 182 (EAAEAADEAAEDK).

This sequence belongs to the bacterial ribosomal protein bL17 family. As to quaternary structure, part of the 50S ribosomal subunit. Contacts protein L32.

This Corynebacterium jeikeium (strain K411) protein is Large ribosomal subunit protein bL17.